Here is a 378-residue protein sequence, read N- to C-terminus: Leukocyte elastase inhibitor (378 aa).

The residue at position 1 (Met-1) is an N-acetylmethionine. Residue Lys-137 is modified to N6-acetyllysine. Ser-299 is subject to Phosphoserine. A CARD-binding motif (CBM) region spans residues 350-378 (DFIADHPFIFFIRHNPSSNILFLGRLSSP).

It belongs to the serpin family. Ov-serpin subfamily. In terms of assembly, monomer. Interacts (via C-terminus) with CASP1; CASP4 (via CARD domain) and CASP5; these interactions regulate the activity of inflammatory caspases. Interacts with PRTN3. Interacts with GZMH.

It localises to the secreted. It is found in the cytoplasm. The protein localises to the cytolytic granule. Its subcellular location is the early endosome. Neutrophil serine protease inhibitor that plays an essential role in the regulation of the innate immune response, inflammation and cellular homeostasis. Acts primarily to protect the cell from proteases released in the cytoplasm during stress or infection. These proteases are important in killing microbes but when released from granules, these potent enzymes also destroy host proteins and contribute to mortality. Regulates the activity of the neutrophil proteases elastase, cathepsin G, proteinase-3, chymase, chymotrypsin, and kallikrein-3. Also acts as a potent intracellular inhibitor of GZMH by directly blocking its proteolytic activity. During inflammation, limits the activity of inflammatory caspases CASP1, CASP4 and CASP5 by suppressing their caspase-recruitment domain (CARD) oligomerization and enzymatic activation. When secreted, promotes the proliferation of beta-cells via its protease inhibitory function. Functionally, may be cleaved leading to a loss of its anti-protease activity and to the appearance of an endonuclease activity. However no catalytic site was identified. The chain is Leukocyte elastase inhibitor (SERPINB1) from Sus scrofa (Pig).